Consider the following 201-residue polypeptide: Protease (201 aa).

Residues H56, D73, and C121 contribute to the active site.

The protein belongs to the peptidase C5 family. In terms of assembly, interacts with protease cofactor pVI-C; this interaction is necessary for protease activation.

It is found in the virion. Its subcellular location is the host nucleus. The catalysed reaction is Cleaves proteins of the adenovirus and its host cell at two consensus sites: -Yaa-Xaa-Gly-Gly-|-Xaa- and -Yaa-Xaa-Gly-Xaa-|-Gly- (in which Yaa is Met, Ile or Leu, and Xaa is any amino acid).. Requires DNA and protease cofactor for maximal activation. Inside nascent virions, becomes partially activated by binding to the viral DNA, allowing it to cleave the cofactor that binds to the protease and fully activates it. Actin, like the viral protease cofactor, seems to act as a cofactor in the cleavage of cytokeratin 18 and of actin itself. Functionally, cleaves viral precursor proteins (pTP, pIIIa, pVI, pVII, pVIII, and pX) inside newly assembled particles giving rise to mature virions. Protease complexed to its cofactor slides along the viral DNA to specifically locate and cleave the viral precursors. Mature virions have a weakened organization compared to the unmature virions, thereby facilitating subsequent uncoating. Without maturation, the particle lacks infectivity and is unable to uncoat. Late in adenovirus infection, in the cytoplasm, may participate in the cytoskeleton destruction. Cleaves host cell cytoskeletal keratins K7 and K18. This Homo sapiens (Human) protein is Protease.